A 258-amino-acid chain; its full sequence is Small ribosomal subunit protein uS15m (258 aa).

The transit peptide at 1-57 directs the protein to the mitochondrion; that stretch reads MLRAAWRALSSVRAQAVTRAPVPALRGGSSASLLSARCGLQPPSLLRAARAYAAVQK. Positions 229-258 are disordered; sequence KAAAAAAKKEKNEGVPENPSNAVPEKTQVN.

It belongs to the universal ribosomal protein uS15 family. Component of the mitochondrial ribosome small subunit (28S) which comprises a 12S rRNA and about 30 distinct proteins. Interacts with METTL17.

It is found in the mitochondrion matrix. The protein is Small ribosomal subunit protein uS15m (Mrps15) of Mus musculus (Mouse).